A 430-amino-acid polypeptide reads, in one-letter code: Putative O-antigen transporter (430 aa).

Transmembrane regions (helical) follow at residues 23 to 39 (IIIA…LISM), 45 to 61 (YAIF…CSAV), 96 to 112 (IAII…SGVI), 131 to 147 (LFFT…IGAI), 163 to 179 (LLNA…LLYI), 192 to 208 (LIVL…CYIV), 236 to 252 (LFTL…YMVI), 266 to 282 (VTMK…TAIL), 309 to 325 (ILLG…FIYL), 342 to 358 (VSIL…CIRV), 373 to 389 (LKIL…IGGI), and 400 to 416 (ISGV…LTVF).

The protein resides in the cell inner membrane. It functions in the pathway bacterial outer membrane biogenesis; LPS O-antigen biosynthesis. Functionally, may be involved in the translocation process of the nascent O-polysaccharide molecules and/or its ligation to lipid A core units. This is Putative O-antigen transporter (rfbX) from Salmonella typhimurium (strain LT2 / SGSC1412 / ATCC 700720).